The primary structure comprises 1538 residues: Ferredoxin-dependent glutamate synthase (1538 aa).

The active-site For GATase activity is Cys-34. Residues 34–431 form the Glutamine amidotransferase type-2 domain; it reads CGVGFIADVN…PGQMISVDIF (398 aa). 1109-1166 lines the FMN pocket; the sequence is LSEVHQLLAENQLRDRVTLRVDGGLRTGSDIVLAAIMGAEEFGFGTVAMIATGCIMAR. Positions 1162, 1168, and 1173 each coordinate [3Fe-4S] cluster.

The protein belongs to the glutamate synthase family. Monomer. [3Fe-4S] cluster is required as a cofactor. It depends on FAD as a cofactor. FMN serves as cofactor.

It localises to the plastid. It is found in the chloroplast stroma. The catalysed reaction is 2 oxidized [2Fe-2S]-[ferredoxin] + 2 L-glutamate = L-glutamine + 2 reduced [2Fe-2S]-[ferredoxin] + 2-oxoglutarate + 2 H(+). It participates in amino-acid biosynthesis; L-glutamate biosynthesis via GLT pathway; L-glutamate from 2-oxoglutarate and L-glutamine (ferredoxin route): step 1/1. The protein operates within energy metabolism; nitrogen metabolism. This Pyropia yezoensis (Susabi-nori) protein is Ferredoxin-dependent glutamate synthase (gltB).